We begin with the raw amino-acid sequence, 95 residues long: Cell division topological specificity factor (95 aa).

The protein belongs to the MinE family.

In terms of biological role, prevents the cell division inhibition by proteins MinC and MinD at internal division sites while permitting inhibition at polar sites. This ensures cell division at the proper site by restricting the formation of a division septum at the midpoint of the long axis of the cell. This chain is Cell division topological specificity factor, found in Methylorubrum extorquens (strain PA1) (Methylobacterium extorquens).